A 557-amino-acid polypeptide reads, in one-letter code: Nucleoporin AMO1 (557 aa).

A C3H1-type zinc finger spans residues 1–25 (MTVCRFWQQGYCRNGNACKFEHPPK). Residues 114–141 (QGALNEIQAAYQAAQQQIQNTLQNIPAA) are a coiled coil. The tract at residues 161-297 (ESSKGSSTGG…SALGPKPGAF (137 aa)) is disordered. 10 SXFG repeats span residues 171–174 (SVFG), 200–203 (SAFG), 213–216 (SAFG), 228–231 (SAFG), 240–243 (SAFG), 249–252 (STFG), 262–265 (SAFG), 282–285 (SAFG), 303–306 (SAFG), and 314–317 (SPFG). The segment covering 195–215 (STPSTSAFGQPSPLGQKSSAF) has biased composition (polar residues). Positions 243 to 253 (GSPQTGSTFGQ) are enriched in polar residues. Residues 315-463 (PFGAAAQATQ…DLLSYATKNP (149 aa)) form a disordered region. 2 stretches are compositionally biased toward polar residues: residues 321-338 (QATQPANPFGQPSQQAAN) and 351-366 (GQPSTTTAQNPFGQPS). SXFG repeat units follow at residues 348–351 (SAFG), 370–373 (SAFG), 387–390 (SLFG), and 407–410 (SAFG). Low complexity predominate over residues 367-385 (TQSSAFGQQQPQQAGTFGS). Residues 388–429 (LFGQQQQQPSNVFGQPSTTSAFGSQAATSGFSQLGNATSTIG) are compositionally biased toward polar residues. Over residues 430-443 (ASPAGAQAPASKSP) the composition is skewed to low complexity.

The nuclear pore complex (NPC) constitutes the exclusive means of nucleocytoplasmic transport. NPCs allow the passive diffusion of ions and small molecules and the active, nuclear transport receptor-mediated bidirectional transport of macromolecules such as proteins, RNAs, ribonucleoparticles (RNPs), and ribosomal subunits across the nuclear envelope. The 55-60 MDa NPC is composed of at least 28 different subunits: AMO1, ELYS, GLE1, GLE2, MLP1, NDC1, NIC96, NSP1, NUP133, NUP145, NUP152, NUP159, NUP170, NUP188, NUP192, NUP37, NUP49, NUP53, NUP56, NUP57, NUP82, NUP84, NUP85, POM152, POM33, POM34, SEC13 and SEH1. Due to its 8-fold rotational symmetry, all subunits are present with 8 copies or multiples thereof.

The protein localises to the nucleus. It is found in the nuclear pore complex. The protein resides in the nucleus membrane. Functions as a component of the nuclear pore complex (NPC). NPC components, collectively referred to as nucleoporins (NUPs), can play the role of both NPC structural components and of docking or interaction partners for transiently associated nuclear transport factors. Active directional transport is assured by both, a Phe-Gly (FG) repeat affinity gradient for these transport factors across the NPC and a transport cofactor concentration gradient across the nuclear envelope (GSP1 and GSP2 GTPases associated predominantly with GTP in the nucleus, with GDP in the cytoplasm). AMO1 is specifically important for nuclear protein and mRNA export. The chain is Nucleoporin AMO1 (AMO1) from Chaetomium thermophilum (strain DSM 1495 / CBS 144.50 / IMI 039719) (Thermochaetoides thermophila).